A 288-amino-acid chain; its full sequence is Polyamine aminopropyltransferase (288 aa).

One can recognise a PABS domain in the interval 9–238; sequence ETLHDQFGQY…GIMTFAWATD (230 aa). Residue Gln33 participates in S-methyl-5'-thioadenosine binding. 2 residues coordinate spermidine: His64 and Asp88. S-methyl-5'-thioadenosine contacts are provided by residues Glu108 and 140-141; that span reads DG. Asp158 (proton acceptor) is an active-site residue. 158 to 161 serves as a coordination point for spermidine; that stretch reads DCTD. Pro165 serves as a coordination point for S-methyl-5'-thioadenosine.

It belongs to the spermidine/spermine synthase family. In terms of assembly, homodimer or homotetramer.

The protein resides in the cytoplasm. It catalyses the reaction S-adenosyl 3-(methylsulfanyl)propylamine + putrescine = S-methyl-5'-thioadenosine + spermidine + H(+). It participates in amine and polyamine biosynthesis; spermidine biosynthesis; spermidine from putrescine: step 1/1. Its function is as follows. Catalyzes the irreversible transfer of a propylamine group from the amino donor S-adenosylmethioninamine (decarboxy-AdoMet) to putrescine (1,4-diaminobutane) to yield spermidine. The sequence is that of Polyamine aminopropyltransferase from Escherichia coli O17:K52:H18 (strain UMN026 / ExPEC).